The sequence spans 213 residues: Methylthioribulose-1-phosphate dehydratase (213 aa).

Zn(2+)-binding residues include histidine 104 and histidine 106.

It belongs to the aldolase class II family. MtnB subfamily. It depends on Zn(2+) as a cofactor.

It catalyses the reaction 5-(methylsulfanyl)-D-ribulose 1-phosphate = 5-methylsulfanyl-2,3-dioxopentyl phosphate + H2O. It participates in amino-acid biosynthesis; L-methionine biosynthesis via salvage pathway; L-methionine from S-methyl-5-thio-alpha-D-ribose 1-phosphate: step 2/6. Its function is as follows. Catalyzes the dehydration of methylthioribulose-1-phosphate (MTRu-1-P) into 2,3-diketo-5-methylthiopentyl-1-phosphate (DK-MTP-1-P). In Stenotrophomonas maltophilia (strain K279a), this protein is Methylthioribulose-1-phosphate dehydratase.